A 287-amino-acid polypeptide reads, in one-letter code: Large ribosomal subunit protein uL2 (287 aa).

The disordered stretch occupies residues valine 220–serine 287. The segment covering valine 271–serine 287 has biased composition (basic residues).

The protein belongs to the universal ribosomal protein uL2 family. In terms of assembly, part of the 50S ribosomal subunit. Forms a bridge to the 30S subunit in the 70S ribosome.

In terms of biological role, one of the primary rRNA binding proteins. Required for association of the 30S and 50S subunits to form the 70S ribosome, for tRNA binding and peptide bond formation. It has been suggested to have peptidyltransferase activity; this is somewhat controversial. Makes several contacts with the 16S rRNA in the 70S ribosome. The polypeptide is Large ribosomal subunit protein uL2 (Prochlorococcus marinus (strain MIT 9515)).